The sequence spans 314 residues: DNA topoisomerase I (314 aa).

Residues 77–314 (IQNRNAKRDR…VDHVKSSTDG (238 aa)) enclose the Topo IB-type catalytic domain. Residue Tyr274 is the O-(3'-phospho-DNA)-tyrosine intermediate of the active site.

This sequence belongs to the type IB topoisomerase family.

It is found in the virion. The catalysed reaction is ATP-independent breakage of single-stranded DNA, followed by passage and rejoining.. Releases the supercoiling and torsional tension of DNA introduced during the DNA replication and transcription by transiently cleaving and rejoining one strand of the DNA duplex. Introduces a single-strand break via transesterification at the specific target site 5'-[CT]CCTTp site in duplex DNA. The scissile phosphodiester is attacked by the catalytic tyrosine of the enzyme, resulting in the formation of a DNA-(3'-phosphotyrosyl)-enzyme intermediate and the expulsion of a 5'-OH DNA strand. The free DNA strand then undergoes passage around the unbroken strand thus removing DNA supercoils. Finally, in the religation step, the DNA 5'-OH attacks the covalent intermediate to expel the active-site tyrosine and restore the DNA phosphodiester backbone. This chain is DNA topoisomerase I (OPG111), found in Cynomys gunnisoni (Gunnison's prairie dog).